The chain runs to 392 residues: MKRQALAAMIASLFALAACGGEQAAQAPAETPAASAEAASSAAQATAETPAGELPVIDAVTTHAPEVPPAIDRDYPAKVRVKMETVEKTMKMDDGVEYRYWTFDGDVPGRMIRVREGDTVEVEFSNNPSSTVPHNVDFHAATGQGGGAAATFTAPGRTSTFSFKALQPGLYIYHCAVAPVGMHIANGMYGLILVEPKEGLPKVDKEFYIVQGDFYTKGKKGAQGLQPFDMDKAVAEQPEYVVFNGHVGSIAGDNALKAKAGETVRMYVGNGGPNLVSSFHVIGEIFDKVYVEGGKLINENVQSTIVPAGGSAIVEFKVDIPGSYTLVDHSIFRAFNKGALGQLKVEGAENPEIMTQKLSDTAYAGSGAASAPAASAPAASAPAASASEKSVY.

Positions 1 to 18 (MKRQALAAMIASLFALAA) are cleaved as a signal peptide. Residue cysteine 19 is the site of N-palmitoyl cysteine attachment. Cysteine 19 carries S-diacylglycerol cysteine lipidation. The interval 30–49 (ETPAASAEAASSAAQATAET) is disordered. 2 Plastocyanin-like domains span residues 101-195 (WTFD…ILVE) and 245-346 (GHVG…LKVE). Positions 134, 139, 174, 175, 183, and 188 each coordinate Cu cation. Position 139 (histidine 139) interacts with substrate. Histidine 280 provides a ligand contact to substrate. Histidine 329 is a binding site for Cu cation. The tract at residues 367 to 392 (GAASAPAASAPAASAPAASASEKSVY) is disordered. 4 consecutive repeat copies span residues 368–372 (AASAP), 373–377 (AASAP), 378–382 (AASAP), and 383–387 (AASAS). The interval 368–387 (AASAPAASAPAASAPAASAS) is 4 X 5 AA tandem repeats of A-A-S-A-P.

It belongs to the multicopper oxidase family. As to quaternary structure, homotrimer. Cu(+) serves as cofactor. Requires Cu(2+) as cofactor. In terms of processing, palmitoylated.

Its subcellular location is the cell outer membrane. It catalyses the reaction nitric oxide + Fe(III)-[cytochrome c] + H2O = Fe(II)-[cytochrome c] + nitrite + 2 H(+). Functionally, catalyzes the reduction of nitrite to nitric oxide (NO), probably with azurin as electron donor. Essential for growth and survival in oxygen-depleted environments. Can also provide protection against killing by normal human sera. The protein is Copper-containing nitrite reductase (aniA) of Neisseria gonorrhoeae.